Consider the following 226-residue polypeptide: Cytidylate kinase (226 aa).

12–20 contributes to the ATP binding site; that stretch reads GPSGAGKGT.

It belongs to the cytidylate kinase family. Type 1 subfamily.

The protein resides in the cytoplasm. It catalyses the reaction CMP + ATP = CDP + ADP. It carries out the reaction dCMP + ATP = dCDP + ADP. This is Cytidylate kinase from Colwellia psychrerythraea (strain 34H / ATCC BAA-681) (Vibrio psychroerythus).